A 458-amino-acid polypeptide reads, in one-letter code: LysM domain-containing protein ARB_05157 (458 aa).

The N-terminal stretch at 1–19 (MVSLKVCFLLLASSELAFG) is a signal peptide. The LysM 1 domain maps to 157-203 (AFHLVKQGEDCGTISATYGITSAQFLAWNPSAGKDCTGLWANAYACV). A disordered region spans residues 210-232 (PPKTTSQAPQPTPTKPSNGIETP). Polar residues predominate over residues 212–229 (KTTSQAPQPTPTKPSNGI). LysM domains lie at 245–291 (KFHL…YACV), 325–371 (KFYL…YSCV), and 409–455 (KFHF…YLCV).

It is found in the secreted. Functionally, might have a role in sequestration of chitin oligosaccharides (breakdown products of fungal cell walls that are released during invasion and act as triggers of host immunity) to dampen host defense. The polypeptide is LysM domain-containing protein ARB_05157 (Arthroderma benhamiae (strain ATCC MYA-4681 / CBS 112371) (Trichophyton mentagrophytes)).